The chain runs to 181 residues: Ribosome maturation factor RimM (181 aa).

Positions 97–170 (AGEFWLPDLM…RIEVVAIPGL (74 aa)) constitute a PRC barrel domain.

Belongs to the RimM family. As to quaternary structure, binds ribosomal protein uS19.

The protein resides in the cytoplasm. Functionally, an accessory protein needed during the final step in the assembly of 30S ribosomal subunit, possibly for assembly of the head region. Essential for efficient processing of 16S rRNA. May be needed both before and after RbfA during the maturation of 16S rRNA. It has affinity for free ribosomal 30S subunits but not for 70S ribosomes. The protein is Ribosome maturation factor RimM of Gloeobacter violaceus (strain ATCC 29082 / PCC 7421).